A 456-amino-acid polypeptide reads, in one-letter code: Probable glycine dehydrogenase (decarboxylating) subunit 1 (456 aa).

Belongs to the GcvP family. N-terminal subunit subfamily. The glycine cleavage system is composed of four proteins: P, T, L and H. In this organism, the P 'protein' is a heterodimer of two subunits.

The enzyme catalyses N(6)-[(R)-lipoyl]-L-lysyl-[glycine-cleavage complex H protein] + glycine + H(+) = N(6)-[(R)-S(8)-aminomethyldihydrolipoyl]-L-lysyl-[glycine-cleavage complex H protein] + CO2. Functionally, the glycine cleavage system catalyzes the degradation of glycine. The P protein binds the alpha-amino group of glycine through its pyridoxal phosphate cofactor; CO(2) is released and the remaining methylamine moiety is then transferred to the lipoamide cofactor of the H protein. The protein is Probable glycine dehydrogenase (decarboxylating) subunit 1 of Legionella pneumophila (strain Corby).